The following is a 426-amino-acid chain: Tyrosine--tRNA ligase (426 aa).

Tyrosine 37 provides a ligand contact to L-tyrosine. A 'HIGH' region motif is present at residues 42–51; the sequence is PTADSLHLGH. L-tyrosine contacts are provided by tyrosine 175 and glutamine 179. The 'KMSKS' region signature appears at 235 to 239; the sequence is KFGKT. Lysine 238 lines the ATP pocket. Positions 357 to 415 constitute an S4 RNA-binding domain; that stretch reads TDLMQALVESELQPSRGQARKAIAANGVTVNGIKQPDPDYVLNENDRYFSNYTLLRRGK.

This sequence belongs to the class-I aminoacyl-tRNA synthetase family. TyrS type 1 subfamily. As to quaternary structure, homodimer.

It is found in the cytoplasm. The enzyme catalyses tRNA(Tyr) + L-tyrosine + ATP = L-tyrosyl-tRNA(Tyr) + AMP + diphosphate + H(+). Its function is as follows. Catalyzes the attachment of tyrosine to tRNA(Tyr) in a two-step reaction: tyrosine is first activated by ATP to form Tyr-AMP and then transferred to the acceptor end of tRNA(Tyr). The polypeptide is Tyrosine--tRNA ligase (Klebsiella pneumoniae (strain 342)).